The chain runs to 1139 residues: Protein lin-25 (1139 aa).

Residues 695–701 carry the Nuclear localization signal motif; that stretch reads IKKKKDP.

Expressed in seam cells and all six vulva precursor cells (VPC). After VPC division, expression is restricted to descendants of the VPC cell lineages P5.p, P6.p and P7.p (at protein level).

The protein localises to the nucleus. It is found in the cytoplasm. Its function is as follows. Participates in the inductive signaling pathway downstream of let-60 Ras and the RAF/MAP kinase cascade to regulate specification and differentiation of many cell types. Positively regulates the fate of vulval precursor cells. Required for induction of the P12 and excretory duct cell fates. In males, it is also required for proper formation of spicules. Does not function in the signaling pathway that promotes exit from pachytene. Plays a role in responses to M.nematophilum-mediated bacterial infection by promoting tail swelling and preventing constipation. This chain is Protein lin-25 (lin-25), found in Caenorhabditis elegans.